Reading from the N-terminus, the 156-residue chain is Ribosomal RNA large subunit methyltransferase H (156 aa).

S-adenosyl-L-methionine-binding positions include leucine 73, glycine 104, and 123–128 (LSRLTL).

This sequence belongs to the RNA methyltransferase RlmH family. Homodimer.

It is found in the cytoplasm. It catalyses the reaction pseudouridine(1915) in 23S rRNA + S-adenosyl-L-methionine = N(3)-methylpseudouridine(1915) in 23S rRNA + S-adenosyl-L-homocysteine + H(+). Functionally, specifically methylates the pseudouridine at position 1915 (m3Psi1915) in 23S rRNA. This chain is Ribosomal RNA large subunit methyltransferase H, found in Thiobacillus denitrificans (strain ATCC 25259 / T1).